Reading from the N-terminus, the 272-residue chain is PILR alpha-associated neural protein (272 aa).

The signal sequence occupies residues 1–27; it reads MWPAQLLSQLLPLWPLLLLPLSLPAQG. The tract at residues 25-93 is disordered; it reads AQGSSHRSPP…PSGFEEGPPS (69 aa). Residues 28–174 lie on the Extracellular side of the membrane; it reads SSHRSPPAPA…FGGRGEGVDP (147 aa). Thr136 carries O-linked (GalNAc...) threonine glycosylation. Residues 175-195 form a helical membrane-spanning segment; the sequence is QLYVTITISIIIVLVATGIIF. Residues 196-272 are Cytoplasmic-facing; it reads KFCWDRSQKR…KGAPAFQLNR (77 aa). The segment at 205–272 is disordered; it reads RRRPSGQQGA…KGAPAFQLNR (68 aa). Polar residues predominate over residues 209–225; that stretch reads SGQQGALRQEESQQPLT.

O-glycosylation at Thr-136 is essential for recognition by PILRA.

The protein resides in the membrane. Acts as a ligand for PILRA in neuronal tissues, where it may be involved in immune regulation. The polypeptide is PILR alpha-associated neural protein (Pianp) (Rattus norvegicus (Rat)).